The following is a 202-amino-acid chain: Large ribosomal subunit protein bL25 (202 aa).

The interval 182–202 (QTAPEEEEGTAAETTEPELAE) is disordered. Over residues 185–202 (PEEEEGTAAETTEPELAE) the composition is skewed to acidic residues.

This sequence belongs to the bacterial ribosomal protein bL25 family. CTC subfamily. As to quaternary structure, part of the 50S ribosomal subunit; part of the 5S rRNA/L5/L18/L25 subcomplex. Contacts the 5S rRNA. Binds to the 5S rRNA independently of L5 and L18.

This is one of the proteins that binds to the 5S RNA in the ribosome where it forms part of the central protuberance. The sequence is that of Large ribosomal subunit protein bL25 from Enterococcus faecalis (strain ATCC 700802 / V583).